Consider the following 397-residue polypeptide: Oxysterol-binding protein homolog C354.07c (397 aa).

N-linked (GlcNAc...) asparagine glycans are attached at residues asparagine 186 and asparagine 195.

It belongs to the OSBP family.

The protein resides in the endoplasmic reticulum. The protein is Oxysterol-binding protein homolog C354.07c of Schizosaccharomyces pombe (strain 972 / ATCC 24843) (Fission yeast).